The sequence spans 276 residues: Shikimate dehydrogenase (NADP(+)) (276 aa).

Shikimate contacts are provided by residues Ser18–Ser20 and Thr65. The active-site Proton acceptor is the Lys69. Residues Asn90 and Asp106 each contribute to the shikimate site. NADP(+)-binding positions include Gly132–Ala136 and Ile221. Tyr223 lines the shikimate pocket. Gly244 is a binding site for NADP(+).

This sequence belongs to the shikimate dehydrogenase family. As to quaternary structure, homodimer.

The enzyme catalyses shikimate + NADP(+) = 3-dehydroshikimate + NADPH + H(+). It participates in metabolic intermediate biosynthesis; chorismate biosynthesis; chorismate from D-erythrose 4-phosphate and phosphoenolpyruvate: step 4/7. Involved in the biosynthesis of the chorismate, which leads to the biosynthesis of aromatic amino acids. Catalyzes the reversible NADPH linked reduction of 3-dehydroshikimate (DHSA) to yield shikimate (SA). In Paramagnetospirillum magneticum (strain ATCC 700264 / AMB-1) (Magnetospirillum magneticum), this protein is Shikimate dehydrogenase (NADP(+)).